The sequence spans 213 residues: Outer envelope pore protein 24B, chloroplastic (213 aa).

Over 1 to 3 the chain is Cytoplasmic; the sequence is MAM. Residues 4–13 traverse the membrane as a beta stranded segment; sequence KASIKGKYDT. The Chloroplast intermembrane segment spans residues 14-18; it reads DKTSG. A beta stranded membrane pass occupies residues 19–28; sequence IGSLAFNAGD. At 29 to 32 the chain is on the cytoplasmic side; that stretch reads IKLR. A beta stranded transmembrane segment spans residues 33–42; it reads ATMTDATLVA. Over 43-55 the chain is Chloroplast intermembrane; sequence GPTLTGLALAVEK. Residues 56–64 traverse the membrane as a beta stranded segment; sequence PGSFIVEYN. The Cytoplasmic portion of the chain corresponds to 65-70; sequence VPKKDV. Residues 71 to 80 form a beta stranded membrane-spanning segment; that stretch reads RFQFMNTVRI. Over 81–93 the chain is Chloroplast intermembrane; it reads AEKPLNLTYIHSR. The chain crosses the membrane as a beta stranded span at residues 94 to 103; that stretch reads ADNRTIVDGS. Residues 104–108 are Cytoplasmic-facing; it reads LVIDS. A beta stranded membrane pass occupies residues 109–118; it reads ANKLSANHMV. Over 119 to 122 the chain is Chloroplast intermembrane; it reads GTNN. A beta stranded membrane pass occupies residues 123–132; it reads CKIKYTYAHG. Residues 133–144 lie on the Cytoplasmic side of the membrane; it reads GLATFEPCYDLA. The beta stranded transmembrane segment at 145-156 threads the bilayer; that stretch reads KNTWDFAVSRRF. Over 157–159 the chain is Chloroplast intermembrane; sequence YSG. A beta stranded transmembrane segment spans residues 160–168; sequence DNVRATYQT. Over 169–170 the chain is Cytoplasmic; sequence SS. The chain crosses the membrane as a beta stranded span at residues 171–179; sequence KLLGMEWSR. Over 180-201 the chain is Chloroplast intermembrane; that stretch reads NNKASGFKVCASVNLADELKTP. Residues 202–211 traverse the membrane as a beta stranded segment; that stretch reads KLTAETTWNL. The Cytoplasmic portion of the chain corresponds to 212–213; it reads EM.

The protein belongs to the plastid outer envelope porin OEP24 (TC 1.B.28) family. As to quaternary structure, homooligomers form large rather nonselective pores in plastidial outer membranes.

The protein resides in the plastid. It is found in the etioplast membrane. Its subcellular location is the chloroplast outer membrane. Its function is as follows. High-conductance voltage-dependent solute channel with a slight selectivity for cations transporting triosephosphates, dicarboxylic acids, ATP, inorganic phosphate (Pi), sugars, and positively or negatively charged amino acids. The protein is Outer envelope pore protein 24B, chloroplastic (OEP24B) of Arabidopsis thaliana (Mouse-ear cress).